A 349-amino-acid chain; its full sequence is Small ribosomal subunit protein uS2 (349 aa).

This sequence belongs to the universal ribosomal protein uS2 family.

In Methylocella silvestris (strain DSM 15510 / CIP 108128 / LMG 27833 / NCIMB 13906 / BL2), this protein is Small ribosomal subunit protein uS2.